An 88-amino-acid polypeptide reads, in one-letter code: Kunitz-type U15-theraphotoxin-Hhn1m (88 aa).

The N-terminal stretch at 1–27 (MGIARILSAVLFLSVLFVVTFPTLLSA) is a signal peptide. The propeptide occupies 28–33 (DHHDGR). The 49-residue stretch at 37 to 85 (CRLPSDRGRCKASFERWYFNGTTCAKFVYGGYGGNDNRFPTEKACMKRC) folds into the BPTI/Kunitz inhibitor domain. 2 cysteine pairs are disulfide-bonded: Cys-37–Cys-85 and Cys-60–Cys-81.

The protein belongs to the venom Kunitz-type family. 01 (intermediate) subfamily. Expressed by the venom gland.

Its subcellular location is the secreted. In terms of biological role, serine protease inhibitor that inhibits trypsin at a molar ratio of 1:1. This Cyriopagopus hainanus (Chinese bird spider) protein is Kunitz-type U15-theraphotoxin-Hhn1m.